A 315-amino-acid polypeptide reads, in one-letter code: Glycine--tRNA ligase alpha subunit (315 aa).

Belongs to the class-II aminoacyl-tRNA synthetase family. Tetramer of two alpha and two beta subunits.

It localises to the cytoplasm. It carries out the reaction tRNA(Gly) + glycine + ATP = glycyl-tRNA(Gly) + AMP + diphosphate. This Ectopseudomonas mendocina (strain ymp) (Pseudomonas mendocina) protein is Glycine--tRNA ligase alpha subunit.